A 186-amino-acid chain; its full sequence is Tetratricopeptide repeat protein 36 (186 aa).

3 TPR repeats span residues 48 to 81 (SKAL…LPDR), 83 to 115 (SAYN…SGGR), and 120 to 153 (RQSF…GSPF).

This sequence belongs to the TTC36 family.

The polypeptide is Tetratricopeptide repeat protein 36 (Ttc36) (Mus musculus (Mouse)).